A 320-amino-acid chain; its full sequence is UDP-3-O-acyl-N-acetylglucosamine deacetylase (320 aa).

Zn(2+) is bound by residues His-92, His-251, and Asp-255. His-278 (proton donor) is an active-site residue.

This sequence belongs to the LpxC family. The cofactor is Zn(2+).

It catalyses the reaction a UDP-3-O-[(3R)-3-hydroxyacyl]-N-acetyl-alpha-D-glucosamine + H2O = a UDP-3-O-[(3R)-3-hydroxyacyl]-alpha-D-glucosamine + acetate. It functions in the pathway glycolipid biosynthesis; lipid IV(A) biosynthesis; lipid IV(A) from (3R)-3-hydroxytetradecanoyl-[acyl-carrier-protein] and UDP-N-acetyl-alpha-D-glucosamine: step 2/6. Catalyzes the hydrolysis of UDP-3-O-myristoyl-N-acetylglucosamine to form UDP-3-O-myristoylglucosamine and acetate, the committed step in lipid A biosynthesis. This is UDP-3-O-acyl-N-acetylglucosamine deacetylase from Psychrobacter cryohalolentis (strain ATCC BAA-1226 / DSM 17306 / VKM B-2378 / K5).